We begin with the raw amino-acid sequence, 123 residues long: Histone H2B (123 aa).

Residues 1-31 (MPPKTSGKAAKKAGKAQKNITKNDKKKKRKR) form a disordered region. Pro-2 is subject to N-methylproline; partial. Lys-44 carries the post-translational modification N6-succinyllysine. The O-linked (GlcNAc) serine glycan is linked to Ser-110. Lys-114 and Lys-118 each carry N6-succinyllysine. Lys-118 participates in a covalent cross-link: Glycyl lysine isopeptide (Lys-Gly) (interchain with G-Cter in ubiquitin).

This sequence belongs to the histone H2B family. The nucleosome is a histone octamer containing two molecules each of H2A, H2B, H3 and H4 assembled in one H3-H4 heterotetramer and two H2A-H2B heterodimers. The octamer wraps approximately 147 bp of DNA. Post-translationally, phosphorylated by the catalytic component of the Dbf4-dependent kinase (DDK) complex Cdc7. Monoubiquitination of Lys-118 by Bre1 gives a specific tag for epigenetic transcriptional activation and is also prerequisite for histone H3 'Lys-4' and 'Lys-79' methylation. Deubiquitination of Lys-118 by the SAGA complex is involved in activating transcription of a large subset of genes. In terms of processing, methylation at Pro-2 increases upon heat shock. Post-translationally, glcNAcylation at Ser-110 promotes monoubiquitination of Lys-118. It fluctuates in response to extracellular glucose, and associates with transcribed genes.

Its subcellular location is the nucleus. The protein localises to the chromosome. In terms of biological role, core component of nucleosome. Nucleosomes wrap and compact DNA into chromatin, limiting DNA accessibility to the cellular machineries which require DNA as a template. Histones thereby play a central role in transcription regulation, DNA repair, DNA replication and chromosomal stability. DNA accessibility is regulated via a complex set of post-translational modifications of histones, also called histone code, and nucleosome remodeling. The polypeptide is Histone H2B (His2B) (Drosophila sechellia (Fruit fly)).